Reading from the N-terminus, the 254-residue chain is 4-hydroxy-tetrahydrodipicolinate reductase (254 aa).

NAD(+)-binding positions include 8–13, 87–89, and 111–114; these read GASGKM, GTT, and ATNM. The Proton donor/acceptor role is filled by His143. Position 144 (His144) interacts with (S)-2,3,4,5-tetrahydrodipicolinate. Lys147 (proton donor) is an active-site residue. Residue 153–154 coordinates (S)-2,3,4,5-tetrahydrodipicolinate; sequence GT.

The protein belongs to the DapB family.

The protein localises to the cytoplasm. It catalyses the reaction (S)-2,3,4,5-tetrahydrodipicolinate + NAD(+) + H2O = (2S,4S)-4-hydroxy-2,3,4,5-tetrahydrodipicolinate + NADH + H(+). The enzyme catalyses (S)-2,3,4,5-tetrahydrodipicolinate + NADP(+) + H2O = (2S,4S)-4-hydroxy-2,3,4,5-tetrahydrodipicolinate + NADPH + H(+). Its pathway is amino-acid biosynthesis; L-lysine biosynthesis via DAP pathway; (S)-tetrahydrodipicolinate from L-aspartate: step 4/4. In terms of biological role, catalyzes the conversion of 4-hydroxy-tetrahydrodipicolinate (HTPA) to tetrahydrodipicolinate. The sequence is that of 4-hydroxy-tetrahydrodipicolinate reductase from Campylobacter curvus (strain 525.92).